The following is a 237-amino-acid chain: Ribonuclease PH (237 aa).

Residues R86 and 124–126 contribute to the phosphate site; that span reads GTR.

It belongs to the RNase PH family. As to quaternary structure, homohexameric ring arranged as a trimer of dimers.

The catalysed reaction is tRNA(n+1) + phosphate = tRNA(n) + a ribonucleoside 5'-diphosphate. Phosphorolytic 3'-5' exoribonuclease that plays an important role in tRNA 3'-end maturation. Removes nucleotide residues following the 3'-CCA terminus of tRNAs; can also add nucleotides to the ends of RNA molecules by using nucleoside diphosphates as substrates, but this may not be physiologically important. Probably plays a role in initiation of 16S rRNA degradation (leading to ribosome degradation) during starvation. This is Ribonuclease PH from Xanthobacter autotrophicus (strain ATCC BAA-1158 / Py2).